Here is a 453-residue protein sequence, read N- to C-terminus: Tol-Pal system protein TolB (453 aa).

A signal peptide spans 1–31 (MINNLSVSMTKVLKIILTIIIILFNTLSILA).

This sequence belongs to the TolB family. As to quaternary structure, the Tol-Pal system is composed of five core proteins: the inner membrane proteins TolA, TolQ and TolR, the periplasmic protein TolB and the outer membrane protein Pal. They form a network linking the inner and outer membranes and the peptidoglycan layer.

The protein localises to the periplasm. Functionally, part of the Tol-Pal system, which plays a role in outer membrane invagination during cell division and is important for maintaining outer membrane integrity. The chain is Tol-Pal system protein TolB from Orientia tsutsugamushi (strain Boryong) (Rickettsia tsutsugamushi).